A 156-amino-acid chain; its full sequence is Transcriptional regulator MraZ (156 aa).

2 SpoVT-AbrB domains span residues 5 to 51 and 80 to 123; these read TFEK…GKAL and MAKL…SREA.

The protein belongs to the MraZ family. Forms oligomers.

The protein resides in the cytoplasm. It is found in the nucleoid. This chain is Transcriptional regulator MraZ, found in Caulobacter vibrioides (strain ATCC 19089 / CIP 103742 / CB 15) (Caulobacter crescentus).